The chain runs to 401 residues: Beta-ketoadipyl-CoA thiolase (401 aa).

Cys91 acts as the Acyl-thioester intermediate in catalysis. Residues His357 and Cys387 each act as proton acceptor in the active site.

This sequence belongs to the thiolase-like superfamily. Thiolase family. Homotetramer.

The enzyme catalyses succinyl-CoA + acetyl-CoA = 3-oxoadipyl-CoA + CoA. The protein operates within aromatic compound metabolism; beta-ketoadipate pathway; acetyl-CoA and succinyl-CoA from 3-oxoadipate: step 2/2. Its function is as follows. Catalyzes thiolytic cleavage of beta-ketoadipyl-CoA to succinyl-CoA and acetyl-CoA. In Pseudomonas knackmussii (strain DSM 6978 / CCUG 54928 / LMG 23759 / B13), this protein is Beta-ketoadipyl-CoA thiolase (pcaF).